Reading from the N-terminus, the 525-residue chain is GMP synthase [glutamine-hydrolyzing] (525 aa).

A Glutamine amidotransferase type-1 domain is found at 9–207; sequence RILILDFGSQ…VLGICGCEAL (199 aa). Cysteine 86 functions as the Nucleophile in the catalytic mechanism. Active-site residues include histidine 181 and glutamate 183. The region spanning 208 to 400 is the GMPS ATP-PPase domain; it reads WTSATIIEDA…LGLPYDMLYR (193 aa). An ATP-binding site is contributed by 235–241; the sequence is SGGVDSS.

In terms of assembly, homodimer.

It carries out the reaction XMP + L-glutamine + ATP + H2O = GMP + L-glutamate + AMP + diphosphate + 2 H(+). The protein operates within purine metabolism; GMP biosynthesis; GMP from XMP (L-Gln route): step 1/1. Functionally, catalyzes the synthesis of GMP from XMP. This chain is GMP synthase [glutamine-hydrolyzing], found in Yersinia pseudotuberculosis serotype IB (strain PB1/+).